The sequence spans 572 residues: Arginine--tRNA ligase (572 aa).

A 'HIGH' region motif is present at residues proline 122 to histidine 132.

This sequence belongs to the class-I aminoacyl-tRNA synthetase family. In terms of assembly, monomer.

Its subcellular location is the cytoplasm. It carries out the reaction tRNA(Arg) + L-arginine + ATP = L-arginyl-tRNA(Arg) + AMP + diphosphate. This Neisseria gonorrhoeae (strain NCCP11945) protein is Arginine--tRNA ligase.